The sequence spans 1672 residues: Probable outer membrane protein PmpB (1672 aa).

The signal sequence occupies residues 1 to 14; it reads MSSMKWLSATAVFA. Disordered stretches follow at residues 69–122, 203–263, 384–415, and 734–765; these read IPVK…GGAF, NTAE…GSGG, EAQTNKSSVTAASQSGPNTTPTPTPPVTAKGG, and STGVATTATTSQSPTVSSFLPRATAGSSPAPA. Low complexity-rich tracts occupy residues 77-88, 100-111, and 203-234; these read DDSSTSTPTTSS, SSSSSPNSGDTS, and NTAEVVPEETTPNPNPGTQTTTSQPSPTSKVQ. Composition is skewed to polar residues over residues 235–256 and 384–399; these read SLFTYSSSTQANGNGADSQTPS and EAQTNKSSVTAASQSG. Over residues 734-744 the composition is skewed to low complexity; sequence STGVATTATTS. The Autotransporter domain maps to 1379–1672; sequence DDAAYNNFWV…MTSCGARMIF (294 aa).

The protein belongs to the PMP outer membrane protein family.

It is found in the secreted. It localises to the cell wall. Its subcellular location is the cell outer membrane. In Chlamydia muridarum (strain MoPn / Nigg), this protein is Probable outer membrane protein PmpB (pmpB).